The following is a 515-amino-acid chain: Methionine--tRNA ligase (515 aa).

Residues 13 to 23 carry the 'HIGH' region motif; it reads AYPNGKPHIGH. A 'KMSKS' region motif is present at residues 300–304; it reads KMSKS. Lys-303 contributes to the ATP binding site.

The protein belongs to the class-I aminoacyl-tRNA synthetase family. MetG type 2B subfamily. As to quaternary structure, monomer.

It is found in the cytoplasm. The catalysed reaction is tRNA(Met) + L-methionine + ATP = L-methionyl-tRNA(Met) + AMP + diphosphate. Functionally, is required not only for elongation of protein synthesis but also for the initiation of all mRNA translation through initiator tRNA(fMet) aminoacylation. The chain is Methionine--tRNA ligase from Brucella suis biovar 1 (strain 1330).